A 266-amino-acid chain; its full sequence is Large ribosomal subunit protein uL2m (266 aa).

The protein belongs to the universal ribosomal protein uL2 family.

It localises to the mitochondrion. This is Large ribosomal subunit protein uL2m (mrpl2) from Dictyostelium citrinum (Slime mold).